The primary structure comprises 242 residues: Pyridoxine 5'-phosphate synthase (242 aa).

Residue asparagine 7 coordinates 3-amino-2-oxopropyl phosphate. Aspartate 9–histidine 10 serves as a coordination point for 1-deoxy-D-xylulose 5-phosphate. Residue arginine 18 participates in 3-amino-2-oxopropyl phosphate binding. Catalysis depends on histidine 43, which acts as the Proton acceptor. Residues arginine 45 and histidine 50 each coordinate 1-deoxy-D-xylulose 5-phosphate. Glutamate 70 (proton acceptor) is an active-site residue. Threonine 100 contacts 1-deoxy-D-xylulose 5-phosphate. Histidine 190 functions as the Proton donor in the catalytic mechanism. Residues glycine 191 and glycine 212–histidine 213 each bind 3-amino-2-oxopropyl phosphate.

It belongs to the PNP synthase family. In terms of assembly, homooctamer; tetramer of dimers.

Its subcellular location is the cytoplasm. The enzyme catalyses 3-amino-2-oxopropyl phosphate + 1-deoxy-D-xylulose 5-phosphate = pyridoxine 5'-phosphate + phosphate + 2 H2O + H(+). Its pathway is cofactor biosynthesis; pyridoxine 5'-phosphate biosynthesis; pyridoxine 5'-phosphate from D-erythrose 4-phosphate: step 5/5. Catalyzes the complicated ring closure reaction between the two acyclic compounds 1-deoxy-D-xylulose-5-phosphate (DXP) and 3-amino-2-oxopropyl phosphate (1-amino-acetone-3-phosphate or AAP) to form pyridoxine 5'-phosphate (PNP) and inorganic phosphate. The sequence is that of Pyridoxine 5'-phosphate synthase from Thermodesulfovibrio yellowstonii (strain ATCC 51303 / DSM 11347 / YP87).